Reading from the N-terminus, the 815-residue chain is DNA replication licensing factor Mcm6 (815 aa).

The C4-type zinc finger occupies 152–179 (CLDCQTEIRNVEQQFKFTNPTICRNPVC). In terms of domain architecture, MCM spans 338–544 (LYQNLITCLF…VVDYAIARKI (207 aa)). ATP contacts are provided by S391, T392, A393, K394, S395, and N496. The short motif at 520–523 (SRFD) is the Arginine finger element. 2 residues coordinate ADP: R611 and E614. Positions 672-693 (DDIDMENNGSAANTETDTLDTS) are disordered. Residues 678–693 (NNGSAANTETDTLDTS) are compositionally biased toward polar residues.

The protein belongs to the MCM family. As to quaternary structure, component of the Mcm2-7 complex. The complex forms a toroidal hexameric ring with the proposed subunit order Mcm2-Mcm6-Mcm4-Mcm7-Mcm3-Mcm5. The heterodimers of mcm4/mcm6 and mcm3/mcm5 interact with mcm2 and mcm7.

It localises to the nucleus. The enzyme catalyses ATP + H2O = ADP + phosphate + H(+). In terms of biological role, acts as a component of the Mcm2-7 complex (Mcm complex) which is the putative replicative helicase essential for 'once per cell cycle' DNA replication initiation and elongation in eukaryotic cells. Core component of CDC45-MCM-GINS (CMG) helicase, the molecular machine that unwinds template DNA during replication, and around which the replisome is built. The active ATPase sites in the Mcm2-7 ring are formed through the interaction surfaces of two neighboring subunits such that a critical structure of a conserved arginine finger motif is provided in trans relative to the ATP-binding site of the Walker A box of the adjacent subunit. The six ATPase active sites, however, are likely to contribute differentially to the complex helicase activity Required for DNA replication and cell proliferation. Required for mitotic cycles, endocycles, and the special S phase associated with the amplification of chorion genes; has a role in origin unwinding or fork elongation at chorion loci. Its function is as follows. Acts as a component of the MCM2-7 complex (MCM complex) which is the replicative helicase essential for 'once per cell cycle' DNA replication initiation and elongation in eukaryotic cells. Core component of CDC45-MCM-GINS (CMG) helicase, the molecular machine that unwinds template DNA during replication, and around which the replisome is built. The active ATPase sites in the MCM2-7 ring are formed through the interaction surfaces of two neighboring subunits such that a critical structure of a conserved arginine finger motif is provided in trans relative to the ATP-binding site of the Walker A box of the adjacent subunit. The six ATPase active sites, however, are likely to contribute differentially to the complex helicase activity. The sequence is that of DNA replication licensing factor Mcm6 (Mcm6) from Drosophila pseudoobscura pseudoobscura (Fruit fly).